The following is a 744-amino-acid chain: MGVEPFAHDPAPSELIHSVPACGSPERRVMRPMVREGWLADRQHSDRRGRGRERFLPVSWDAALDLVAGEIRRVSADHGNAAIFAGSYGWTSCGRFHHASTLLKRMLNLVGGFTGHVDTYSIAAGPVILRHTLGDDRACGGQANTLDSIAEHSQTLVVFGAMSPRTAQSEAGGIGAHHLETYLRRIVERGVRVILVSPLKDDLPDWVAAEWWPIRPNTDTALMLGLAGEIVRSGRQDSDFLARCTSGSELYLAYLRGEGDGRPKDAEWASTITGLPAEAIRALAGDLPRTRSMLTVSWSLQRAHHGEQPFWAALGLAAVIGQIGRPGGGVGYGYGSLGGVGAPFTIGKSPAMSQLSKPINSFIPVARISDMLLNPGGPYSYEGEDRRYPDIRLVYWSGGNPFHHHQDLNRLSEAWTRPETIIVQDPMFTATAKRADIVLPASTSIERNDLAGNKRSDFILAMGQAIAPLGEARSDFDIFNALSGKLGVAAAFNEGRDEMGWIRHLYEESRNHAQRHHHFEMPDFETFWAQGHAPCPVQRDHTYLAAFREDPGAHPLDTESGLIVLGSATLARLGYADCGPHPAWIEPAEWLGKAQAGELHLISHQPKGRLHSQLETAEASLAGKREGRDEVMLHPDDASVRGIADGQTVRLWNARGACLATAQVTDSVAAGVAILPTGAWFTPAEAEGPELSGNPNVLTLDIGSSAFGQGCSAHTCLVRIEAHAGDAGDAVRIYDAHLAAILPT.

Mo-bis(molybdopterin guanine dinucleotide) is bound at residue S121.

The protein belongs to the prokaryotic molybdopterin-containing oxidoreductase family. Mo-bis(molybdopterin guanine dinucleotide) serves as cofactor.

Functionally, this enzyme may serve as a scavenger, allowing the cell to utilize biotin sulfoxide as a biotin source. It reduces a spontaneous oxidation product of biotin, D-biotin D-sulfoxide (BSO or BDS), back to biotin. In Cereibacter sphaeroides (Rhodobacter sphaeroides), this protein is Biotin sulfoxide reductase.